The chain runs to 696 residues: Interleukin-1 receptor accessory protein-like 1 (696 aa).

The signal sequence occupies residues 1 to 18 (MKAPIPHLILLYATFTQS). In terms of domain architecture, Ig-like C2-type 1 spans 19 to 134 (LKVVTKRGSA…YCMKVSISLT (116 aa)). At 19 to 357 (LKVVTKRGSA…LLHKRELMYT (339 aa)) the chain is on the extracellular side. Cystine bridges form between Cys31–Cys126 and Cys53–Cys118. N-linked (GlcNAc...) asparagine glycosylation is found at Asn63, Asn122, and Asn138. Disulfide bonds link Cys143–Cys185 and Cys164–Cys216. 2 Ig-like C2-type domains span residues 143 to 232 (CYNS…TELT) and 242 to 350 (PKLL…VLLH). N-linked (GlcNAc...) asparagine glycosylation is found at Asn213, Asn264, and Asn331. A disulfide bridge connects residues Cys267 and Cys334. The chain crosses the membrane as a helical span at residues 358-378 (VELAGGLGAILLLLVCLVTIY). The Cytoplasmic portion of the chain corresponds to 379-696 (KCYKIEIMLF…RETSISSVIW (318 aa)). Residues 403-559 (KDYDAYLSYT…KFWKRLQYEM (157 aa)) enclose the TIR domain. Glu491 is an active-site residue. The interaction with NCS1 stretch occupies residues 549–644 (SKFWKRLQYE…TGTLPLTSIG (96 aa)). The tract at residues 659 to 680 (GQRPQTKSSREQNPDEAHTNSA) is disordered. Residues 666–676 (SSREQNPDEAH) are compositionally biased toward basic and acidic residues.

It belongs to the interleukin-1 receptor family. In terms of assembly, homodimer. Interacts (calcium-independent) with NCS1. Interacts (via the first immunoglobilin domain) with PTPRD (via the second immunoglobilin domain); this interaction is PTPRD-splicing-dependent and induces pre- and post-synaptic differentiation of neurons and is required for IL1RAPL1-mediated synapse formation. Detected at low levels in heart, skeletal muscle, ovary, skin, amygdala, caudate nucleus, corpus callosum, hippocampus, substantia nigra and thalamus. Detected at very low levels in tonsil, prostate, testis, small intestine, placenta, colon and fetal liver.

Its subcellular location is the cell membrane. The protein localises to the cytoplasm. It is found in the cell projection. The protein resides in the axon. It localises to the dendrite. The catalysed reaction is NAD(+) + H2O = ADP-D-ribose + nicotinamide + H(+). In terms of biological role, may regulate secretion and presynaptic differentiation through inhibition of the activity of N-type voltage-gated calcium channel. May activate the MAP kinase JNK. Plays a role in neurite outgrowth. During dendritic spine formation can bidirectionally induce pre- and post-synaptic differentiation of neurons by trans-synaptically binding to PTPRD. In Homo sapiens (Human), this protein is Interleukin-1 receptor accessory protein-like 1 (IL1RAPL1).